A 43-amino-acid chain; its full sequence is uncharacterized protein (43 aa).

This is an uncharacterized protein from Saccharomyces cerevisiae (strain ATCC 204508 / S288c) (Baker's yeast).